Reading from the N-terminus, the 134-residue chain is Small ribosomal subunit protein uS9 (134 aa).

The segment covering 98–114 (SKQELKSHGFLTRDPRK) has biased composition (basic and acidic residues). The tract at residues 98–134 (SKQELKSHGFLTRDPRKKERKKYGHKKARKSFQFSKR) is disordered. Over residues 115–134 (KERKKYGHKKARKSFQFSKR) the composition is skewed to basic residues.

This sequence belongs to the universal ribosomal protein uS9 family.

In Chlamydia caviae (strain ATCC VR-813 / DSM 19441 / 03DC25 / GPIC) (Chlamydophila caviae), this protein is Small ribosomal subunit protein uS9.